The primary structure comprises 98 residues: NADH-ubiquinone oxidoreductase chain 4L (98 aa).

Transmembrane regions (helical) follow at residues 1–21, 29–49, and 61–81; these read MSMV…GLLM, SLLC…LMIL, and IILL…LVMI.

It belongs to the complex I subunit 4L family. In terms of assembly, core subunit of respiratory chain NADH dehydrogenase (Complex I) which is composed of 45 different subunits.

Its subcellular location is the mitochondrion inner membrane. It catalyses the reaction a ubiquinone + NADH + 5 H(+)(in) = a ubiquinol + NAD(+) + 4 H(+)(out). Its function is as follows. Core subunit of the mitochondrial membrane respiratory chain NADH dehydrogenase (Complex I) which catalyzes electron transfer from NADH through the respiratory chain, using ubiquinone as an electron acceptor. Part of the enzyme membrane arm which is embedded in the lipid bilayer and involved in proton translocation. This is NADH-ubiquinone oxidoreductase chain 4L (MT-ND4L) from Vicugna pacos (Alpaca).